Consider the following 150-residue polypeptide: UPF0178 protein PSEEN5341 (150 aa).

This sequence belongs to the UPF0178 family.

This Pseudomonas entomophila (strain L48) protein is UPF0178 protein PSEEN5341.